Here is a 537-residue protein sequence, read N- to C-terminus: Cytoplasmic dynein 2 intermediate chain 2 (537 aa).

S15 carries the phosphoserine modification. A DYNLL2 binding region spans residues 80 to 93; the sequence is RTHADAQVQTEAPE. The DYNLRB1 binding stretch occupies residues 107–132; it reads LRLEAFLRRVEAMVIRELNNNWQSHA. WD repeat units follow at residues 216-256, 265-309, 391-431, 434-474, and 481-521; these read EVPS…DPLL, THTD…QLRL, PHGG…PLTS, LSHK…QKPT, and QDGS…TEQG.

It belongs to the dynein light intermediate chain family. In terms of assembly, the cytoplasmic dynein 2 complex consists of two catalytic heavy chains (HCs) and a number of non-catalytic subunits presented by intermediate chains (ICs), light intermediate chains (LICs) and light chains (LCs). Among them, a heavy chain (DYNC2H1), two intermediate chains (DYNC2I2 and DYNC2I1), a light intermediate chain (DYNC2LI1), and a light chain (DYNLT2B) are unique to the cytoplasmic dynein complex 2, but a subset of the light chains are also shared by dynein-1 and dynein-2 complexes. Interacts with DYNC2I1; their C-terminal domains each bind a copy of the heavy chain, and their extended N-terminal regions are held together by an array of light chain dimers. Interacts with DYNLL2; this interaction is essential for dynein-2-mediated retrograde trafficking of ciliary proteins. Interacts with DYNLRB1; this interaction is essential for dynein-2-mediated retrograde trafficking of ciliary proteins. Interacts (via the WD domains) with MAP3K7 and TAB3. Interacts (via WD domains) with TAB2 (via C-terminus). Interacts (via WD domains) with TRAF6 (via TRAF-type domains). In terms of tissue distribution, expressed in brain, thymus, heart, lung, liver, spleen, kidney, testis and intestine.

Its subcellular location is the cytoplasm. It is found in the cytoskeleton. The protein localises to the cilium basal body. The protein resides in the cilium axoneme. It localises to the cell projection. Its subcellular location is the cilium. It is found in the microtubule organizing center. The protein localises to the centrosome. The protein resides in the filopodium. Functionally, acts as one of several non-catalytic accessory components of the cytoplasmic dynein 2 complex (dynein-2 complex), a motor protein complex that drives the movement of cargos along microtubules within cilia and flagella in concert with the intraflagellar transport (IFT) system. DYNC2I2 plays a major role in retrograde ciliary protein trafficking and in ciliogenesis. Required also to maintain a functional transition zone. Acts as a negative regulator of the Toll-like and IL-1R receptor signaling pathways. Inhibits the MAP3K7-induced NF-kappa-B activation pathway. Inhibits MAP3K7 phosphorylation at 'Thr-184' and 'Thr-187' upon Il-1 beta stimulation. In Mus musculus (Mouse), this protein is Cytoplasmic dynein 2 intermediate chain 2 (Dync2i2).